Consider the following 64-residue polypeptide: DNA gyrase inhibitor YacG (64 aa).

Cysteine 9, cysteine 12, cysteine 28, and cysteine 32 together coordinate Zn(2+). The segment at 45 to 64 (NAIAGAPDMSDSDGWSEDQY) is disordered. The span at 54 to 64 (SDSDGWSEDQY) shows a compositional bias: acidic residues.

This sequence belongs to the DNA gyrase inhibitor YacG family. In terms of assembly, interacts with GyrB. It depends on Zn(2+) as a cofactor.

Its function is as follows. Inhibits all the catalytic activities of DNA gyrase by preventing its interaction with DNA. Acts by binding directly to the C-terminal domain of GyrB, which probably disrupts DNA binding by the gyrase. This is DNA gyrase inhibitor YacG from Vibrio parahaemolyticus serotype O3:K6 (strain RIMD 2210633).